A 327-amino-acid chain; its full sequence is MKTLLILTILAMAITIGTANIQVDPSGQVQWLQQQLVPQLQQPLSQQPQQTFPQPQQTFPHQPQQQVPQPQQPQQPFLQPQQPFPQQPQQPFPQTQQPQQPFPQQPQQPFPQTQQPQQPFPQQPQQPFPQTQQPQQPFPQLQQPQQPFPQPQQQLPQPQQPQQSFPQQQRPFIQPSLQQQLNPCKNILLQQSKPASLVSSLWSIIWPQSDCQVMRQQCCQQLAQIPQQLQCAAIHSVVHSIIMQQQQQQQQQQGIDIFLPLSQHEQVGQGSLVQGQGIIQPQQPAQLEAIRSLVLQTLPSMCNVYVPPECSIMRAPFASIVAGIGGQ.

An N-terminal signal peptide occupies residues 1-19; sequence MKTLLILTILAMAITIGTA. Over residues 42–81 the composition is skewed to low complexity; it reads QPLSQQPQQTFPQPQQTFPHQPQQQVPQPQQPQQPFLQPQ. The interval 42–169 is disordered; that stretch reads QPLSQQPQQT…QPQQSFPQQQ (128 aa). 3 stretches are compositionally biased toward pro residues: residues 82–91, 100–109, and 118–127; these read QPFPQQPQQP. A compositionally biased stretch (low complexity) spans 128-169; the sequence is FPQTQQPQQPFPQLQQPQQPFPQPQQQLPQPQQPQQSFPQQQ.

The protein belongs to the gliadin/glutenin family.

In terms of biological role, gliadin is the major seed storage protein in wheat. This chain is Gamma-gliadin, found in Triticum aestivum (Wheat).